We begin with the raw amino-acid sequence, 417 residues long: Serine hydroxymethyltransferase 2 (417 aa).

(6S)-5,6,7,8-tetrahydrofolate-binding positions include L121 and G125–L127. At K230 the chain carries N6-(pyridoxal phosphate)lysine. S355 to F357 provides a ligand contact to (6S)-5,6,7,8-tetrahydrofolate.

This sequence belongs to the SHMT family. In terms of assembly, homodimer. Pyridoxal 5'-phosphate serves as cofactor.

Its subcellular location is the cytoplasm. The enzyme catalyses (6R)-5,10-methylene-5,6,7,8-tetrahydrofolate + glycine + H2O = (6S)-5,6,7,8-tetrahydrofolate + L-serine. Its pathway is one-carbon metabolism; tetrahydrofolate interconversion. It functions in the pathway amino-acid biosynthesis; glycine biosynthesis; glycine from L-serine: step 1/1. In terms of biological role, catalyzes the reversible interconversion of serine and glycine with tetrahydrofolate (THF) serving as the one-carbon carrier. This reaction serves as the major source of one-carbon groups required for the biosynthesis of purines, thymidylate, methionine, and other important biomolecules. Also exhibits THF-independent aldolase activity toward beta-hydroxyamino acids, producing glycine and aldehydes, via a retro-aldol mechanism. The chain is Serine hydroxymethyltransferase 2 from Pseudomonas fluorescens (strain ATCC BAA-477 / NRRL B-23932 / Pf-5).